A 91-amino-acid chain; its full sequence is Small ribosomal subunit protein bS16 (91 aa).

This sequence belongs to the bacterial ribosomal protein bS16 family.

This Limosilactobacillus fermentum (strain NBRC 3956 / LMG 18251) (Lactobacillus fermentum) protein is Small ribosomal subunit protein bS16.